We begin with the raw amino-acid sequence, 276 residues long: Anamorsin homolog (276 aa).

An N-terminal SAM-like domain region spans residues 1–152 (MEPYVVDNLN…TRGSSIKLPW (152 aa)). A linker region spans residues 152–189 (WAHSDIEAAWENVDNETSYDVDKNLINTNSLLQKSDYV). Positions 195, 211, 214, and 216 each coordinate [2Fe-2S] cluster. The tract at residues 195 to 216 (CGQEFAKNSIGKRKRACKNCTC) is fe-S binding site A. Residues cysteine 237, cysteine 240, cysteine 248, and cysteine 251 each contribute to the [4Fe-4S] cluster site. 2 short sequence motifs (cx2C motif) span residues 237–240 (CGNC) and 248–251 (CSTC). Residues 237-251 (CGNCYLGDAFRCSTC) are fe-S binding site B.

This sequence belongs to the anamorsin family. As to quaternary structure, monomer. It depends on [2Fe-2S] cluster as a cofactor. [4Fe-4S] cluster serves as cofactor.

It is found in the cytoplasm. It localises to the mitochondrion intermembrane space. Its function is as follows. Component of the cytosolic iron-sulfur (Fe-S) protein assembly (CIA) machinery. Required for the maturation of extramitochondrial Fe-S proteins. Part of an electron transfer chain functioning in an early step of cytosolic Fe-S biogenesis, facilitating the de novo assembly of a [4Fe-4S] cluster on the cytosolic Fe-S scaffold complex. Electrons are transferred from NADPH via a FAD- and FMN-containing diflavin oxidoreductase. Together with the diflavin oxidoreductase, also required for the assembly of the diferric tyrosyl radical cofactor of ribonucleotide reductase (RNR), probably by providing electrons for reduction during radical cofactor maturation in the catalytic small subunit. This Schistosoma japonicum (Blood fluke) protein is Anamorsin homolog.